The sequence spans 344 residues: Protein BIM1 (344 aa).

S2 carries the post-translational modification N-acetylserine. A Calponin-homology (CH) domain is found at 6-107 (GESRTELLTW…FLQWLKKHWI (102 aa)). Residues 126–173 (IITNNSATKPRTVSNPTTAKRSSSTGTGSAMSGGLATRHSSLGINGSR) form a disordered region. The segment covering 127–146 (ITNNSATKPRTVSNPTTAKR) has biased composition (polar residues). Over residues 147–159 (SSSTGTGSAMSGG) the composition is skewed to low complexity. Residue S157 is modified to Phosphoserine. Over residues 163 to 173 (RHSSLGINGSR) the composition is skewed to polar residues. The 94-residue stretch at 188–281 (ELTKSQETIG…LYATAEGFEM (94 aa)) folds into the EB1 C-terminal domain. The tract at residues 292–312 (NLGEHGTVPNQGGYANSNGEV) is disordered.

The protein belongs to the MAPRE family.

It localises to the cytoplasm. The protein localises to the cytoskeleton. Binds microtubules. The sequence is that of Protein BIM1 (BIM1) from Saccharomyces cerevisiae (strain ATCC 204508 / S288c) (Baker's yeast).